The sequence spans 301 residues: D-psicose 3-epimerase (301 aa).

Substrate is bound at residue tyrosine 16. The active-site Proton donor/acceptor is the glutamate 162. Glutamate 162 contributes to the Mn(2+) binding site. Residues glutamate 168 and 195–198 each bind substrate; that span reads DTFH. Aspartate 195 and histidine 221 together coordinate Mn(2+). Arginine 227 is a substrate binding site. Glutamate 256 functions as the Proton donor/acceptor in the catalytic mechanism. Glutamate 256 is a Mn(2+) binding site.

Belongs to the hyi family. As to quaternary structure, homotetramer. Requires Mn(2+) as cofactor. Co(2+) serves as cofactor.

The enzyme catalyses D-allulose = keto-D-fructose. Its activity is regulated as follows. Completely inhibited by EDTA and partially inhibited by Zn(2+), Mg(2+) and Cu(2+). Involved in the biosynthesis of D-psicose. Catalyzes the reversible epimerization of D-fructose at the C3 position to yield D-psicose. The enzyme is highly specific for D-psicose and shows very low activity with D-tagatose. In Enterocloster bolteae (strain ATCC BAA-613 / DSM 15670 / CCUG 46953 / JCM 12243 / WAL 16351) (Clostridium bolteae), this protein is D-psicose 3-epimerase.